The primary structure comprises 429 residues: Serine--tRNA ligase (429 aa).

T235–E237 contacts L-serine. R266–E268 serves as a coordination point for ATP. E289 lines the L-serine pocket. E353–S356 is a binding site for ATP. S389 serves as a coordination point for L-serine.

The protein belongs to the class-II aminoacyl-tRNA synthetase family. Type-1 seryl-tRNA synthetase subfamily. In terms of assembly, homodimer. The tRNA molecule binds across the dimer.

Its subcellular location is the cytoplasm. It catalyses the reaction tRNA(Ser) + L-serine + ATP = L-seryl-tRNA(Ser) + AMP + diphosphate + H(+). The enzyme catalyses tRNA(Sec) + L-serine + ATP = L-seryl-tRNA(Sec) + AMP + diphosphate + H(+). It participates in aminoacyl-tRNA biosynthesis; selenocysteinyl-tRNA(Sec) biosynthesis; L-seryl-tRNA(Sec) from L-serine and tRNA(Sec): step 1/1. Its function is as follows. Catalyzes the attachment of serine to tRNA(Ser). Is also able to aminoacylate tRNA(Sec) with serine, to form the misacylated tRNA L-seryl-tRNA(Sec), which will be further converted into selenocysteinyl-tRNA(Sec). In Haemophilus influenzae (strain PittEE), this protein is Serine--tRNA ligase.